The following is a 534-amino-acid chain: GMP synthase [glutamine-hydrolyzing] (534 aa).

Residues 20–210 (PVLVIDFGAQ…LLVGAGCRPS (191 aa)) enclose the Glutamine amidotransferase type-1 domain. Cys97 functions as the Nucleophile in the catalytic mechanism. Residues His184 and Glu186 contribute to the active site. Residues 211-408 (WTMINIVEEA…LGLPEDIVWR (198 aa)) form the GMPS ATP-PPase domain. Residue 238 to 244 (SGGVDSA) coordinates ATP.

As to quaternary structure, homodimer.

The enzyme catalyses XMP + L-glutamine + ATP + H2O = GMP + L-glutamate + AMP + diphosphate + 2 H(+). The protein operates within purine metabolism; GMP biosynthesis; GMP from XMP (L-Gln route): step 1/1. Catalyzes the synthesis of GMP from XMP. The chain is GMP synthase [glutamine-hydrolyzing] from Parafrankia sp. (strain EAN1pec).